We begin with the raw amino-acid sequence, 110 residues long: Ribonuclease H2 subunit C (110 aa).

The segment at 45–69 (LKREKSATPSSSDNTTSNTFSNGAI) is disordered. Over residues 51–66 (ATPSSSDNTTSNTFSN) the composition is skewed to low complexity.

This sequence belongs to the RNase H2 subunit C family. Highly divergent. As to quaternary structure, the RNase 2 complex is a heterotrimer composed of the catalytic subunit RNH201 and of the non-catalytic subunits RNH202 and RNH203.

The protein resides in the cytoplasm. The protein localises to the nucleus. Functionally, non catalytic subunit of RNase H2, an endonuclease that specifically degrades the RNA of RNA:DNA hybrids. Participates in DNA replication, possibly by mediating the removal of lagging-strand Okazaki fragment RNA primers during DNA replication. Mediates the excision of single ribonucleotides from DNA:RNA duplexes. This chain is Ribonuclease H2 subunit C (RNH203), found in Saccharomyces cerevisiae (strain ATCC 204508 / S288c) (Baker's yeast).